We begin with the raw amino-acid sequence, 78 residues long: RTX-VII (78 aa).

Residues 1 to 22 (MKTIVYLIVSILLLSSTVLVLA) form the signal peptide. A propeptide spanning residues 23 to 40 (EGNAASHELQEYPIEEQR) is cleaved from the precursor. Disulfide bonds link C42/C58, C47/C63, C57/C73, and C65/C71. Residue R76 is modified to Arginine amide.

As to expression, expressed by the venom gland.

The protein localises to the secreted. In terms of biological role, agonist of rat Nav1.3/SCN3A. This toxin increases the peak current amplitude, and potently inhibits the fast inactivation of the channel (EC(50)=120 nM). The inhibition of fast inactivation is voltage-independent (depolarizing voltages ranging from 220 mV to 130 mV). The toxin might bind to the domain IV of the Nav1.3 channel, while domain II might not participate in interacting with the toxin but could determine the efficacy of RTX-VII. In vivo, when intracerebroventricularly injected into mice, the toxin causes involuntary body twitching (seizure-like symptoms). The polypeptide is RTX-VII (Macrothele raveni (Funnel-web spider)).